The chain runs to 107 residues: Small ribosomal subunit protein uS10c (107 aa).

This sequence belongs to the universal ribosomal protein uS10 family. In terms of assembly, part of the 30S ribosomal subunit.

It localises to the plastid. The protein localises to the chloroplast. Functionally, involved in the binding of tRNA to the ribosomes. The polypeptide is Small ribosomal subunit protein uS10c (Phaeodactylum tricornutum (strain CCAP 1055/1)).